The primary structure comprises 417 residues: Phosphoglycerate kinase (417 aa).

Residues valine 23, aspartate 24, phenylalanine 25, asparagine 26, glutamine 39, arginine 40, serine 63, histidine 64, glycine 66, arginine 67, leucine 122, arginine 123, histidine 170, and arginine 171 each coordinate (2R)-3-phosphoglycerate. A Phosphoserine modification is found at serine 203. ADP is bound at residue glycine 214. Glycine 214 is a CDP binding site. Alanine 215 and lysine 216 together coordinate AMP. Alanine 215 contacts ATP. A Mg(2+)-binding site is contributed by alanine 215. Aspartate 219 lines the CDP pocket. Mg(2+) is bound at residue aspartate 219. Lysine 220 is an AMP binding site. Lysine 220 serves as a coordination point for ATP. An ADP-binding site is contributed by glycine 238. Glycine 238 serves as a coordination point for CDP. AMP is bound by residues alanine 239 and glycine 313. 2 residues coordinate ATP: alanine 239 and glycine 313. CDP contacts are provided by glycine 338 and phenylalanine 343. Phenylalanine 343 is an ADP binding site. Residue glutamate 344 coordinates AMP. ATP-binding residues include glutamate 344, aspartate 375, and threonine 376. Position 375 (aspartate 375) interacts with Mg(2+).

Belongs to the phosphoglycerate kinase family. As to quaternary structure, monomer. It depends on Mg(2+) as a cofactor. In terms of processing, dephosphorylated by PTC1 and PTC2 at Ser-203; the protein is cytosolic when dephosphorylated.

Its subcellular location is the cytoplasm. The protein localises to the cytosol. It localises to the mitochondrion. It carries out the reaction (2R)-3-phosphoglycerate + ATP = (2R)-3-phospho-glyceroyl phosphate + ADP. Its pathway is carbohydrate degradation; glycolysis; pyruvate from D-glyceraldehyde 3-phosphate: step 2/5. Functionally, catalyzes one of the two ATP producing reactions in the glycolytic pathway via the reversible conversion of 1,3-diphosphoglycerate to 3-phosphoglycerate. Both L- and D- forms of purine and pyrimidine nucleotides can be used as substrates, but the activity is much lower on pyrimidines. Negatively regulates the biosynthesis of acetyl-CoA from pyruvate in the mitochondrion and consequently also attenuates aflatoxin production. The sequence is that of Phosphoglycerate kinase from Aspergillus flavus (strain ATCC 200026 / FGSC A1120 / IAM 13836 / NRRL 3357 / JCM 12722 / SRRC 167).